A 196-amino-acid chain; its full sequence is Oplophorus-luciferin 2-monooxygenase catalytic subunit (196 aa).

The N-terminal stretch at Met1–Thr27 is a signal peptide.

As to quaternary structure, heterotetramer of a catalytic 19 kDa and a non-catalytic 35 kDa subunit.

Its subcellular location is the secreted. The catalysed reaction is coelenterazine + O2 = coelenteramide + hnu + CO2. Inhibited by micromolar Cu(2+). Its function is as follows. Catalytic subunit of oplophorus-luciferin 2-monooxygenase. Oxidoreductase that converts coelenterazine (the oplophorus luciferin) to coelenteramide under emission of blue light with a maximum at 454 nm. Is also active with bisdeoxycoelenterazine. This Oplophorus gracilirostris (Luminous shrimp) protein is Oplophorus-luciferin 2-monooxygenase catalytic subunit.